A 37-amino-acid polypeptide reads, in one-letter code: Bactericidin B-2 (37 aa).

Glycine 37 is modified (glycine amide).

Belongs to the cecropin family.

The protein localises to the secreted. In terms of biological role, cecropins have lytic and antibacterial activity against several Gram-positive and Gram-negative bacteria. In Manduca sexta (Tobacco hawkmoth), this protein is Bactericidin B-2.